Here is a 201-residue protein sequence, read N- to C-terminus: MEESVHQSIRFGSVADLIMWKNRRGGFLLLGSTTLLWFLFEKCGYSFFPFVVNTQLLSVVILFLWAKSAILFNRPMPQLPNLEITEEFVFMVADAIRVWINTVLAVAREIYVGRNAKQLFRVSVVLWTVSFVGNFLNFLTILYLGVVLSLLIPFLYERYQDLIDEKLSLTHRVIQTQYRKIDERLLQKIIAKPTNKIKKMQ.

Residues 14–201 (VADLIMWKNR…KPTNKIKKMQ (188 aa)) enclose the Reticulon domain. The next 3 helical transmembrane spans lie at 25 to 45 (GGFL…KCGY), 46 to 66 (SFFP…FLWA), and 135 to 155 (FLNF…IPFL).

The protein resides in the endoplasmic reticulum membrane. This chain is Reticulon-like protein B10 (RTNLB10), found in Arabidopsis thaliana (Mouse-ear cress).